The primary structure comprises 725 residues: Prolyl 3-hydroxylase 1 (725 aa).

The N-terminal stretch at Met-1–Ala-14 is a signal peptide. The stretch at Pro-36–Ile-69 is one TPR 1 repeat. Asn-82 is a glycosylation site (N-linked (GlcNAc...) asparagine). 3 TPR repeats span residues Arg-136–His-169, His-198–Ala-231, and Pro-294–Asp-327. Residues Lys-394–Glu-441 are a coiled coil. N-linked (GlcNAc...) asparagine glycosylation is found at Asn-460 and Asn-533. The Fe2OG dioxygenase domain occupies Ser-557 to Leu-671. Fe cation contacts are provided by His-580, Asp-582, and His-652. Arg-662 is a catalytic residue. Over residues Glu-701 to Ala-715 the composition is skewed to polar residues. The disordered stretch occupies residues Glu-701–Leu-725. The Prevents secretion from ER motif lies at Lys-722 to Leu-725.

It belongs to the leprecan family. Binds unfolded collagen in a complex with CYPB and CRTAP. Fe cation is required as a cofactor. It depends on L-ascorbate as a cofactor. As to expression, expressed in embryonic dermis, tendon, cartilage, liver and kidney. Expression in the kidney is restricted to the calyx. In the liver, expression is restricted to the interlobular septum.

It localises to the endoplasmic reticulum. The enzyme catalyses L-prolyl-[collagen] + 2-oxoglutarate + O2 = trans-3-hydroxy-L-prolyl-[collagen] + succinate + CO2. Has prolyl 3-hydroxylase activity catalyzing the post-translational formation of 3-hydroxyproline in -Xaa-Pro-Gly-sequences in collagens, especially types IV and V. May be involved in the secretoty pathway of cells. Has growth suppressive activity in fibroblasts. This Gallus gallus (Chicken) protein is Prolyl 3-hydroxylase 1.